Consider the following 202-residue polypeptide: Peptidyl-tRNA hydrolase (202 aa).

Tyr14 is a tRNA binding site. His19 (proton acceptor) is an active-site residue. 3 residues coordinate tRNA: Tyr64, Asn66, and Asn112.

It belongs to the PTH family. In terms of assembly, monomer.

The protein localises to the cytoplasm. The catalysed reaction is an N-acyl-L-alpha-aminoacyl-tRNA + H2O = an N-acyl-L-amino acid + a tRNA + H(+). Functionally, hydrolyzes ribosome-free peptidyl-tRNAs (with 1 or more amino acids incorporated), which drop off the ribosome during protein synthesis, or as a result of ribosome stalling. Catalyzes the release of premature peptidyl moieties from peptidyl-tRNA molecules trapped in stalled 50S ribosomal subunits, and thus maintains levels of free tRNAs and 50S ribosomes. This is Peptidyl-tRNA hydrolase from Nitrobacter winogradskyi (strain ATCC 25391 / DSM 10237 / CIP 104748 / NCIMB 11846 / Nb-255).